The chain runs to 98 residues: NADH-ubiquinone oxidoreductase chain 4L (98 aa).

3 helical membrane passes run 2–22, 29–49, and 61–81; these read PSIS…MLMF, SLLC…LTIL, and ILLL…LVMV.

Belongs to the complex I subunit 4L family. Core subunit of respiratory chain NADH dehydrogenase (Complex I) which is composed of 45 different subunits.

The protein resides in the mitochondrion inner membrane. It catalyses the reaction a ubiquinone + NADH + 5 H(+)(in) = a ubiquinol + NAD(+) + 4 H(+)(out). Functionally, core subunit of the mitochondrial membrane respiratory chain NADH dehydrogenase (Complex I) which catalyzes electron transfer from NADH through the respiratory chain, using ubiquinone as an electron acceptor. Part of the enzyme membrane arm which is embedded in the lipid bilayer and involved in proton translocation. This Microcebus mittermeieri (Mittermeier's mouse lemur) protein is NADH-ubiquinone oxidoreductase chain 4L (MT-ND4L).